The primary structure comprises 154 residues: Insulin-like peptide 1 (154 aa).

An N-terminal signal peptide occupies residues 1–29; that stretch reads MFSQHNGAAVHGLRLQSLLIAAMLTAAMA. Intrachain disulfides connect C49–C138, C61–C151, and C137–C142. A disordered region spans residues 72 to 92; it reads RESLLGNSDDDEDTEQEVQDD. A propeptide spans 73-122 (connecting peptide); the sequence is ESLLGNSDDDEDTEQEVQDDSSMWQTLDGAGYSFSPLLTNLYGSEVLIKM. A compositionally biased stretch (acidic residues) spans 79-91; that stretch reads SDDDEDTEQEVQD.

It belongs to the insulin family. Heterodimer of a B chain and an A chain linked by two disulfide bonds.

Its subcellular location is the secreted. Functionally, possible ligand of InR/insulin-like receptor. The protein is Insulin-like peptide 1 of Drosophila melanogaster (Fruit fly).